The sequence spans 300 residues: Acetaldehyde dehydrogenase 3 (300 aa).

11 to 14 lines the NAD(+) pocket; that stretch reads SGNI. The active-site Acyl-thioester intermediate is the Cys-126. Residues 157 to 165 and Asn-276 each bind NAD(+); that span reads SAGPGTRAN.

The protein belongs to the acetaldehyde dehydrogenase family.

It catalyses the reaction acetaldehyde + NAD(+) + CoA = acetyl-CoA + NADH + H(+). The chain is Acetaldehyde dehydrogenase 3 (hsaG) from Rhodococcus jostii (strain RHA1).